The primary structure comprises 426 residues: Serine hydroxymethyltransferase (426 aa).

(6S)-5,6,7,8-tetrahydrofolate contacts are provided by residues Leu122 and 126-128 (GHL). Position 231 is an N6-(pyridoxal phosphate)lysine (Lys231).

This sequence belongs to the SHMT family. Homodimer. Pyridoxal 5'-phosphate serves as cofactor.

The protein resides in the cytoplasm. It carries out the reaction (6R)-5,10-methylene-5,6,7,8-tetrahydrofolate + glycine + H2O = (6S)-5,6,7,8-tetrahydrofolate + L-serine. It participates in one-carbon metabolism; tetrahydrofolate interconversion. The protein operates within amino-acid biosynthesis; glycine biosynthesis; glycine from L-serine: step 1/1. In terms of biological role, catalyzes the reversible interconversion of serine and glycine with tetrahydrofolate (THF) serving as the one-carbon carrier. This reaction serves as the major source of one-carbon groups required for the biosynthesis of purines, thymidylate, methionine, and other important biomolecules. Also exhibits THF-independent aldolase activity toward beta-hydroxyamino acids, producing glycine and aldehydes, via a retro-aldol mechanism. The polypeptide is Serine hydroxymethyltransferase (Koribacter versatilis (strain Ellin345)).